A 543-amino-acid chain; its full sequence is CTP synthase (543 aa).

The segment at 1–265 is amidoligase domain; that stretch reads MTRYIFVTGG…DDFVVERFGL (265 aa). A CTP-binding site is contributed by Ser-13. Ser-13 serves as a coordination point for UTP. Residues 14 to 19 and Asp-71 contribute to the ATP site; that span reads SLGKGI. Residues Asp-71 and Glu-139 each coordinate Mg(2+). CTP is bound by residues 146–148, 186–191, and Lys-222; these read DIE and KTKPTQ. UTP contacts are provided by residues 186–191 and Lys-222; that span reads KTKPTQ. Residues 290-541 enclose the Glutamine amidotransferase type-1 domain; it reads TIAMVGKYME…VNAALAQKAK (252 aa). Gly-351 contributes to the L-glutamine binding site. Catalysis depends on Cys-378, which acts as the Nucleophile; for glutamine hydrolysis. L-glutamine is bound by residues 379 to 382, Glu-402, and Arg-469; that span reads LGMQ. Residues His-514 and Glu-516 contribute to the active site.

The protein belongs to the CTP synthase family. In terms of assembly, homotetramer.

The catalysed reaction is UTP + L-glutamine + ATP + H2O = CTP + L-glutamate + ADP + phosphate + 2 H(+). The enzyme catalyses L-glutamine + H2O = L-glutamate + NH4(+). It carries out the reaction UTP + NH4(+) + ATP = CTP + ADP + phosphate + 2 H(+). It functions in the pathway pyrimidine metabolism; CTP biosynthesis via de novo pathway; CTP from UDP: step 2/2. Its activity is regulated as follows. Allosterically activated by GTP, when glutamine is the substrate; GTP has no effect on the reaction when ammonia is the substrate. The allosteric effector GTP functions by stabilizing the protein conformation that binds the tetrahedral intermediate(s) formed during glutamine hydrolysis. Inhibited by the product CTP, via allosteric rather than competitive inhibition. Catalyzes the ATP-dependent amination of UTP to CTP with either L-glutamine or ammonia as the source of nitrogen. Regulates intracellular CTP levels through interactions with the four ribonucleotide triphosphates. In Ectopseudomonas mendocina (strain ymp) (Pseudomonas mendocina), this protein is CTP synthase.